The sequence spans 273 residues: Ribosomal RNA small subunit methyltransferase A (273 aa).

6 residues coordinate S-adenosyl-L-methionine: Asn19, Leu21, Gly46, Glu67, Asp92, and Asn113.

It belongs to the class I-like SAM-binding methyltransferase superfamily. rRNA adenine N(6)-methyltransferase family. RsmA subfamily.

It is found in the cytoplasm. The catalysed reaction is adenosine(1518)/adenosine(1519) in 16S rRNA + 4 S-adenosyl-L-methionine = N(6)-dimethyladenosine(1518)/N(6)-dimethyladenosine(1519) in 16S rRNA + 4 S-adenosyl-L-homocysteine + 4 H(+). Functionally, specifically dimethylates two adjacent adenosines (A1518 and A1519) in the loop of a conserved hairpin near the 3'-end of 16S rRNA in the 30S particle. May play a critical role in biogenesis of 30S subunits. This Hahella chejuensis (strain KCTC 2396) protein is Ribosomal RNA small subunit methyltransferase A.